A 436-amino-acid chain; its full sequence is GTPase Der (436 aa).

EngA-type G domains are found at residues 3–168 (PLIA…PESD) and 177–352 (IRLA…DNRA). Residues 9–16 (GRPNVGKS), 56–60 (DTGGY), 120–123 (NKVE), 183–190 (GRPNVGKS), 230–234 (DTAGL), and 295–298 (NKWD) each bind GTP. The KH-like domain maps to 353–436 (RKISTSALNR…VTISLRFLQK (84 aa)).

It belongs to the TRAFAC class TrmE-Era-EngA-EngB-Septin-like GTPase superfamily. EngA (Der) GTPase family. In terms of assembly, associates with the 50S ribosomal subunit.

In terms of biological role, GTPase that plays an essential role in the late steps of ribosome biogenesis. This Chlorobium phaeovibrioides (strain DSM 265 / 1930) (Prosthecochloris vibrioformis (strain DSM 265)) protein is GTPase Der.